Here is a 101-residue protein sequence, read N- to C-terminus: uncharacterized protein (101 aa).

A helical transmembrane segment spans residues 70-90 (VLFIPIILLLPPSCPLTGVTV).

Its subcellular location is the membrane. This is an uncharacterized protein from Saccharomyces cerevisiae (strain ATCC 204508 / S288c) (Baker's yeast).